Reading from the N-terminus, the 126-residue chain is Aspartate 1-decarboxylase (126 aa).

Ser25 (schiff-base intermediate with substrate; via pyruvic acid) is an active-site residue. The residue at position 25 (Ser25) is a Pyruvic acid (Ser). Thr57 lines the substrate pocket. Tyr58 functions as the Proton donor in the catalytic mechanism. Substrate is bound at residue 73–75 (GGA).

This sequence belongs to the PanD family. Heterooctamer of four alpha and four beta subunits. It depends on pyruvate as a cofactor. Post-translationally, is synthesized initially as an inactive proenzyme, which is activated by self-cleavage at a specific serine bond to produce a beta-subunit with a hydroxyl group at its C-terminus and an alpha-subunit with a pyruvoyl group at its N-terminus.

Its subcellular location is the cytoplasm. The catalysed reaction is L-aspartate + H(+) = beta-alanine + CO2. Its pathway is cofactor biosynthesis; (R)-pantothenate biosynthesis; beta-alanine from L-aspartate: step 1/1. Catalyzes the pyruvoyl-dependent decarboxylation of aspartate to produce beta-alanine. In Stenotrophomonas maltophilia (strain K279a), this protein is Aspartate 1-decarboxylase.